The chain runs to 206 residues: Cytochrome c oxidase assembly factor 8 (206 aa).

A mitochondrion-targeting transit peptide spans methionine 1–leucine 39.

The protein belongs to the COA8 family. N-terminal mitochondrial targeting sequence is cleaved from the mature protein once in the mitochondrion. In terms of processing, in normal conditions, the cytoplasmic precursor protein is rapidly degraded by the ubiquitination-proteasome system (UPS). Oxidative stress induces protein stabilization and import into mitochondria where it protects COX from degradation. Expressed in fibroblasts.

Its subcellular location is the mitochondrion inner membrane. In terms of biological role, required for cytochrome c complex (COX) IV assembly and function Protects COX assembly from oxidation-induced degradation, COX being the terminal component of the mitochondrial respiratory chain. The polypeptide is Cytochrome c oxidase assembly factor 8 (Homo sapiens (Human)).